Consider the following 315-residue polypeptide: N-acetyl-gamma-glutamyl-phosphate reductase (315 aa).

Residue C117 is part of the active site.

This sequence belongs to the NAGSA dehydrogenase family. Type 2 subfamily.

The protein localises to the cytoplasm. The catalysed reaction is N-acetyl-L-glutamate 5-semialdehyde + phosphate + NADP(+) = N-acetyl-L-glutamyl 5-phosphate + NADPH + H(+). Its pathway is amino-acid biosynthesis; L-arginine biosynthesis; N(2)-acetyl-L-ornithine from L-glutamate: step 3/4. Catalyzes the NADPH-dependent reduction of N-acetyl-5-glutamyl phosphate to yield N-acetyl-L-glutamate 5-semialdehyde. This chain is N-acetyl-gamma-glutamyl-phosphate reductase, found in Burkholderia ambifaria (strain ATCC BAA-244 / DSM 16087 / CCUG 44356 / LMG 19182 / AMMD) (Burkholderia cepacia (strain AMMD)).